The chain runs to 35 residues: Cupiennin-1a (35 aa).

Glutamic acid 1-amide is present on Glu35.

The protein belongs to the cationic peptide 04 (cupiennin) family. 01 subfamily. As to quaternary structure, monomer. Interacts with CSTX-1 (AC P81694), CSTX-9 (AC P58604), and CSTX-13 (AC P83919). As to expression, expressed by the venom gland.

The protein resides in the secreted. Has antimicrobial activity against B.subtilis, E.coli, E.faecalis, P.denitrificans, P.aeruginosa, P.putida, S.aureus, and S.epidermidis. Shows insecticidal and hemolytic activities. Probably acts by disturbing membrane function with its amphipathic structure. Synergistically increases the insecticidal activity of CSTX-1 (AC P81694), CSTX-9 (AC P58604), and CSTX-13 (AC P83919) by up to 65%. Also inhibits the formation of nitric oxide by neuronal nitric oxide synthase. The polypeptide is Cupiennin-1a (Cupiennius salei (American wandering spider)).